Here is an 82-residue protein sequence, read N- to C-terminus: Immediate early response 3-interacting protein 1 (82 aa).

2 consecutive transmembrane segments (helical) span residues 2-22 (AFTLYSLMQAALLCVNAIAVL) and 62-82 (VMRVPLIIVNSITIVLLLLFG).

This sequence belongs to the YOS1 family.

Its subcellular location is the endoplasmic reticulum membrane. Its function is as follows. Regulator of endoplasmic reticulum secretion that acts as a key determinant of brain size. Required for secretion of extracellular matrix proteins. Required for correct brain development by depositing sufficient extracellular matrix proteins for tissue integrity and the proliferation of neural progenitors. Acts as a regulator of the unfolded protein response (UPR). The chain is Immediate early response 3-interacting protein 1 from Rattus norvegicus (Rat).